The sequence spans 704 residues: Elongation factor G (704 aa).

A tr-type G domain is found at 8-290 (EKYRNIGICA…GVVRYLPAPN (283 aa)). GTP is bound by residues 17–24 (AHVDAGKT), 88–92 (DTPGH), and 142–145 (NKMD).

The protein belongs to the TRAFAC class translation factor GTPase superfamily. Classic translation factor GTPase family. EF-G/EF-2 subfamily.

The protein resides in the cytoplasm. Functionally, catalyzes the GTP-dependent ribosomal translocation step during translation elongation. During this step, the ribosome changes from the pre-translocational (PRE) to the post-translocational (POST) state as the newly formed A-site-bound peptidyl-tRNA and P-site-bound deacylated tRNA move to the P and E sites, respectively. Catalyzes the coordinated movement of the two tRNA molecules, the mRNA and conformational changes in the ribosome. In Francisella tularensis subsp. tularensis (strain FSC 198), this protein is Elongation factor G.